Reading from the N-terminus, the 882-residue chain is MFNFFKKNKLNKFQNTINEIHQIGNTVKNYSDAELKKQTHKLKKKIIQNSNLTEILPESFAIVKEAIKRSTGMILFDVQLVGSIVLHQGQIAEMKTGEGKTIVAITTGYLNALTSKGVHIITVNDYLAKRDSELAQKICSYIDLKVGLITQSMTYEEKKRAYDCDITYITNSELGFDYLRDNMAIEFNQIVQRGFNFAIIDEVDSILIDEARTPLIISGPFEIEINKYKKSTSIANTLQKDLDYEIDEKTKNITLTEKGISRCENMLNIDNLYDIHDSWIQYLLNSLKAKDLFLKNQHYIVKNNEIIIVDEFTGRVMQGRRWSDGLHQAIESKENIPIQQENKTLASITYQNLFLLYEKLSGMTGTAKTEETELDKIYNLEVLEIPTNKICKRQDLPDLVYKTEYKKWQAIADECFDMYHIGRPTLIGTTNVEKSELLAKILMELQIPFNLLNAKPENVSREAEIITQAGRKNTITISTNMAGRGTDIILGGNPEALSKLALTYYLQNKLGLKVNYLLNNIETQITTIINNYVLDMQELDIYKYKNIDLKKIQYYIEKIIKNEHTKYSEEEKLQKLYLKILSEYKNICYQEKQEVLKLGGLYVIGTERHESRRIDNQLRGRAGRQGDIGASRFFLSLEDNLLRIFGGDKISQLMDNLNIDEHTPIESIILSKSLDSAQKKVESYFYDIRKQLFEYDEVINNQRQAIYAERKRILQSSFTRDCIIEYAESTIDEILTAFYREDNINNKNHIIKKIYQLLNLTENFHFNTLYDMNYKQIQEFLYEQLRISYDLRESYLEQLRPGLIRKLEKYYLLQQIDKAWQDHLDKMALLRESIGWRSYGQQDPLVEYKNEAFSLFINMVRYIRQTVTYLTMRSRLIINVNN.

Residues Gln79, 97-101 (GEGKT), and Asp487 contribute to the ATP site.

It belongs to the SecA family.

Its subcellular location is the plastid. The protein resides in the chloroplast stroma. The protein localises to the chloroplast thylakoid membrane. It catalyses the reaction ATP + H2O + cellular proteinSide 1 = ADP + phosphate + cellular proteinSide 2.. Functionally, has a central role in coupling the hydrolysis of ATP to the transfer of proteins across the thylakoid membrane. This chain is Protein translocase subunit SecA, found in Gracilaria tenuistipitata var. liui (Red alga).